Reading from the N-terminus, the 85-residue chain is Protein C4 (85 aa).

The N-myristoyl glycine; by host moiety is linked to residue Gly-2. The interval 42–65 is disordered; it reads LNPAPTSTPTSTRTETLSNGENSR. Residues 44–59 show a composition bias toward low complexity; it reads PAPTSTPTSTRTETLS.

Belongs to the geminiviridae protein AC4/C4 family.

The protein localises to the host cell membrane. Pathogenicity determinant. May act as a suppressor of RNA-mediated gene silencing, also known as post-transcriptional gene silencing (PTGS), a mechanism of plant viral defense that limits the accumulation of viral RNAs. The polypeptide is Protein C4 (Solanum lycopersicum (Tomato)).